A 136-amino-acid polypeptide reads, in one-letter code: Large ribosomal subunit protein uL16c (136 aa).

This sequence belongs to the universal ribosomal protein uL16 family. As to quaternary structure, part of the 50S ribosomal subunit.

The protein resides in the plastid. Its subcellular location is the chloroplast. This chain is Large ribosomal subunit protein uL16c, found in Zea mays (Maize).